The sequence spans 156 residues: ATP synthase subunit b (156 aa).

A helical transmembrane segment spans residues 3 to 23 (ITLTIFAQALAFAGLIWIVAT).

It belongs to the ATPase B chain family. As to quaternary structure, F-type ATPases have 2 components, F(1) - the catalytic core - and F(0) - the membrane proton channel. F(1) has five subunits: alpha(3), beta(3), gamma(1), delta(1), epsilon(1). F(0) has three main subunits: a(1), b(2) and c(10-14). The alpha and beta chains form an alternating ring which encloses part of the gamma chain. F(1) is attached to F(0) by a central stalk formed by the gamma and epsilon chains, while a peripheral stalk is formed by the delta and b chains.

Its subcellular location is the cell inner membrane. Functionally, f(1)F(0) ATP synthase produces ATP from ADP in the presence of a proton or sodium gradient. F-type ATPases consist of two structural domains, F(1) containing the extramembraneous catalytic core and F(0) containing the membrane proton channel, linked together by a central stalk and a peripheral stalk. During catalysis, ATP synthesis in the catalytic domain of F(1) is coupled via a rotary mechanism of the central stalk subunits to proton translocation. Component of the F(0) channel, it forms part of the peripheral stalk, linking F(1) to F(0). This Xanthomonas oryzae pv. oryzae (strain MAFF 311018) protein is ATP synthase subunit b.